The following is a 578-amino-acid chain: Proline--tRNA ligase (578 aa).

The protein belongs to the class-II aminoacyl-tRNA synthetase family. ProS type 1 subfamily. In terms of assembly, homodimer.

Its subcellular location is the cytoplasm. It carries out the reaction tRNA(Pro) + L-proline + ATP = L-prolyl-tRNA(Pro) + AMP + diphosphate. Functionally, catalyzes the attachment of proline to tRNA(Pro) in a two-step reaction: proline is first activated by ATP to form Pro-AMP and then transferred to the acceptor end of tRNA(Pro). As ProRS can inadvertently accommodate and process non-cognate amino acids such as alanine and cysteine, to avoid such errors it has two additional distinct editing activities against alanine. One activity is designated as 'pretransfer' editing and involves the tRNA(Pro)-independent hydrolysis of activated Ala-AMP. The other activity is designated 'posttransfer' editing and involves deacylation of mischarged Ala-tRNA(Pro). The misacylated Cys-tRNA(Pro) is not edited by ProRS. The chain is Proline--tRNA ligase from Burkholderia pseudomallei (strain K96243).